Reading from the N-terminus, the 358-residue chain is Putative zinc metalloprotease RC0203 (358 aa).

Histidine 18 is a binding site for Zn(2+). Residue glutamate 19 is part of the active site. Residue histidine 22 participates in Zn(2+) binding. The next 4 helical transmembrane spans lie at 52 to 71, 97 to 119, 285 to 307, and 332 to 351; these read GVRWKICLIPLGGYVKIYGY, FLIVAAGPLINYLLAIIIFAGFY, YLLFIAMLSVNLGLLNLLPIPVL, and ILLQLGAIIIIFLIIIAVSN. Positions 102-186 constitute a PDZ domain; it reads AGPLINYLLA…STLTIERKSE (85 aa).

This sequence belongs to the peptidase M50B family. Zn(2+) is required as a cofactor.

The protein localises to the cell inner membrane. The protein is Putative zinc metalloprotease RC0203 of Rickettsia conorii (strain ATCC VR-613 / Malish 7).